Here is a 179-residue protein sequence, read N- to C-terminus: Large ribosomal subunit protein uL5 (179 aa).

This sequence belongs to the universal ribosomal protein uL5 family. Part of the 50S ribosomal subunit; part of the 5S rRNA/L5/L18/L25 subcomplex. Contacts the 5S rRNA and the P site tRNA. Forms a bridge to the 30S subunit in the 70S ribosome.

Functionally, this is one of the proteins that bind and probably mediate the attachment of the 5S RNA into the large ribosomal subunit, where it forms part of the central protuberance. In the 70S ribosome it contacts protein S13 of the 30S subunit (bridge B1b), connecting the 2 subunits; this bridge is implicated in subunit movement. Contacts the P site tRNA; the 5S rRNA and some of its associated proteins might help stabilize positioning of ribosome-bound tRNAs. This chain is Large ribosomal subunit protein uL5, found in Shewanella frigidimarina (strain NCIMB 400).